The primary structure comprises 95 residues: Large ribosomal subunit protein bL27 (95 aa).

Positions 1 to 9 are excised as a propeptide; it reads MLKMNLQFF.

This sequence belongs to the bacterial ribosomal protein bL27 family. The N-terminus is cleaved by ribosomal processing cysteine protease Prp.

The chain is Large ribosomal subunit protein bL27 from Lachnoclostridium phytofermentans (strain ATCC 700394 / DSM 18823 / ISDg) (Clostridium phytofermentans).